Reading from the N-terminus, the 75-residue chain is Exodeoxyribonuclease 7 small subunit (75 aa).

It belongs to the XseB family. In terms of assembly, heterooligomer composed of large and small subunits.

It localises to the cytoplasm. It catalyses the reaction Exonucleolytic cleavage in either 5'- to 3'- or 3'- to 5'-direction to yield nucleoside 5'-phosphates.. In terms of biological role, bidirectionally degrades single-stranded DNA into large acid-insoluble oligonucleotides, which are then degraded further into small acid-soluble oligonucleotides. This Thermotoga maritima (strain ATCC 43589 / DSM 3109 / JCM 10099 / NBRC 100826 / MSB8) protein is Exodeoxyribonuclease 7 small subunit.